A 182-amino-acid polypeptide reads, in one-letter code: Probable chorismate pyruvate-lyase (182 aa).

3 residues coordinate substrate: Arg81, Leu119, and Glu171.

It belongs to the UbiC family.

It is found in the cytoplasm. It catalyses the reaction chorismate = 4-hydroxybenzoate + pyruvate. The protein operates within cofactor biosynthesis; ubiquinone biosynthesis. Functionally, removes the pyruvyl group from chorismate, with concomitant aromatization of the ring, to provide 4-hydroxybenzoate (4HB) for the ubiquinone pathway. The polypeptide is Probable chorismate pyruvate-lyase (Pseudomonas putida (Arthrobacter siderocapsulatus)).